We begin with the raw amino-acid sequence, 267 residues long: 4-hydroxy-tetrahydrodipicolinate reductase (267 aa).

NAD(+)-binding positions include 8–13 (GAAGRM) and aspartate 34. NADP(+) is bound at residue arginine 35. NAD(+)-binding positions include 98–100 (GTT) and 122–125 (AANF). Histidine 155 (proton donor/acceptor) is an active-site residue. A (S)-2,3,4,5-tetrahydrodipicolinate-binding site is contributed by histidine 156. Residue lysine 159 is the Proton donor of the active site. Residue 165–166 (GT) coordinates (S)-2,3,4,5-tetrahydrodipicolinate.

This sequence belongs to the DapB family.

The protein localises to the cytoplasm. The enzyme catalyses (S)-2,3,4,5-tetrahydrodipicolinate + NAD(+) + H2O = (2S,4S)-4-hydroxy-2,3,4,5-tetrahydrodipicolinate + NADH + H(+). It carries out the reaction (S)-2,3,4,5-tetrahydrodipicolinate + NADP(+) + H2O = (2S,4S)-4-hydroxy-2,3,4,5-tetrahydrodipicolinate + NADPH + H(+). It functions in the pathway amino-acid biosynthesis; L-lysine biosynthesis via DAP pathway; (S)-tetrahydrodipicolinate from L-aspartate: step 4/4. In terms of biological role, catalyzes the conversion of 4-hydroxy-tetrahydrodipicolinate (HTPA) to tetrahydrodipicolinate. The polypeptide is 4-hydroxy-tetrahydrodipicolinate reductase (Pseudomonas putida (strain ATCC 47054 / DSM 6125 / CFBP 8728 / NCIMB 11950 / KT2440)).